Consider the following 83-residue polypeptide: Mu-theraphotoxin-Hhn2p (83 aa).

The N-terminal stretch at 1 to 21 (MKASMYLALAGLVLLFVVGYA) is a signal peptide. The propeptide occupies 22–48 (SESEEKEFPRELLSKIFAVDDFKGEER). 3 disulfide bridges follow: cysteine 50–cysteine 65, cysteine 57–cysteine 70, and cysteine 64–cysteine 77. Leucine 81 bears the Leucine amide mark.

It belongs to the neurotoxin 10 (Hwtx-1) family. 15 (Hntx-3) subfamily. In terms of assembly, monomer. In terms of tissue distribution, expressed by the venom gland.

It is found in the secreted. Its function is as follows. Lethal neurotoxin. Selectively blocks tetrodotoxin-sensitive voltage-gated sodium channels (Nav). Does not affect tetrodotoxin-resistant voltage-gated sodium channels or calcium channels. The protein is Mu-theraphotoxin-Hhn2p of Cyriopagopus hainanus (Chinese bird spider).